Here is a 252-residue protein sequence, read N- to C-terminus: Trans-aconitate 2-methyltransferase (252 aa).

Belongs to the methyltransferase superfamily. Tam family.

Its subcellular location is the cytoplasm. It carries out the reaction trans-aconitate + S-adenosyl-L-methionine = (E)-3-(methoxycarbonyl)pent-2-enedioate + S-adenosyl-L-homocysteine. Catalyzes the S-adenosylmethionine monomethyl esterification of trans-aconitate. In Escherichia coli O7:K1 (strain IAI39 / ExPEC), this protein is Trans-aconitate 2-methyltransferase.